The sequence spans 148 residues: Protein NrdI (148 aa).

Belongs to the NrdI family.

Probably involved in ribonucleotide reductase function. This is Protein NrdI from Mycolicibacterium gilvum (strain PYR-GCK) (Mycobacterium gilvum (strain PYR-GCK)).